A 192-amino-acid chain; its full sequence is Erythropoietin (192 aa).

An N-terminal signal peptide occupies residues Met1 to Cys26. Residues Cys33 and Cys187 are joined by a disulfide bond. Residues Asn50, Asn64, and Asn109 are each glycosylated (N-linked (GlcNAc...) asparagine).

It belongs to the EPO/TPO family. Produced by kidney or liver of adult mammals and by liver of fetal or neonatal mammals.

It localises to the secreted. Functionally, hormone involved in the regulation of erythrocyte proliferation and differentiation and the maintenance of a physiological level of circulating erythrocyte mass. Binds to EPOR leading to EPOR dimerization and JAK2 activation thereby activating specific downstream effectors, including STAT1 and STAT3. The sequence is that of Erythropoietin (EPO) from Alexandromys oeconomus (Tundra vole).